Reading from the N-terminus, the 429-residue chain is Probable electron transfer flavoprotein-quinone oxidoreductase YdiS (429 aa).

Residue Ala8 to Leu22 coordinates FAD.

This sequence belongs to the ETF-QO/FixC family. Requires FAD as cofactor.

Its function is as follows. Probably accepts electrons from YdiQ/YdiR and reduces a quinone. The protein is Probable electron transfer flavoprotein-quinone oxidoreductase YdiS (ydiS) of Escherichia coli (strain K12).